The primary structure comprises 161 residues: Ecotin (161 aa).

A signal peptide spans Met1 to Ala23. Cys69 and Cys106 form a disulfide bridge.

It belongs to the protease inhibitor I11 (ecotin) family. Homodimer.

It localises to the periplasm. Its function is as follows. General inhibitor of family S1 serine proteases. This chain is Ecotin, found in Pseudomonas fluorescens (strain Pf0-1).